The chain runs to 304 residues: Glutaminase (304 aa).

Substrate-binding residues include Ser63, Asn114, Glu158, Asn165, Tyr189, Tyr240, and Val258.

This sequence belongs to the glutaminase family. In terms of assembly, homotetramer.

The enzyme catalyses L-glutamine + H2O = L-glutamate + NH4(+). The chain is Glutaminase from Shewanella putrefaciens (strain CN-32 / ATCC BAA-453).